The chain runs to 484 residues: Putative myrosinase 6 (484 aa).

N-linked (GlcNAc...) asparagine glycosylation is present at Asn28. Residues Gln39, His140, and 184–185 (NQ) each bind a beta-D-glucoside. Cys204 and Cys207 are joined by a disulfide. Residue Asn260 is glycosylated (N-linked (GlcNAc...) asparagine). A beta-D-glucoside is bound by residues Tyr321, Trp440, 447-448 (EF), and Phe456. Asn462 carries N-linked (GlcNAc...) asparagine glycosylation.

It belongs to the glycosyl hydrolase 1 family.

The catalysed reaction is a thioglucoside + H2O = a sugar + a thiol.. This is Putative myrosinase 6 from Arabidopsis thaliana (Mouse-ear cress).